Here is a 629-residue protein sequence, read N- to C-terminus: TRAF3-interacting protein 1 (629 aa).

Residues 130–511 (AGDKLDQKGK…RSLVSEASRK (382 aa)) form a disordered region. The span at 145-306 (SQDKENREGR…KIKAAEEISK (162 aa)) shows a compositional bias: basic and acidic residues. A coiled-coil region spans residues 220–282 (RDREKDKTRE…RREKEKDKER (63 aa)). Acidic residues predominate over residues 352–362 (EQDETESEGEA). The span at 394-403 (RPSSARPAAP) shows a compositional bias: low complexity. The span at 471–511 (GDDKHGGLVKKILETKKDYESSPSSKSKEQDRSLVSEASRK) shows a compositional bias: basic and acidic residues. Residues 511–602 (KKERELVARE…QLIKDQQDKI (92 aa)) are a coiled coil.

It belongs to the TRAF3IP1 family. In terms of assembly, component of the IFT complex B, at least composed of ift20, ift22, ift25, ift27, ift46, ift52, traf3ip1/ift54, ift57, ift74, ift80, ift81, and ift88. Interacts with ift88. Interacts with il13ra1. Binds to microtubules, traf3 and disc1. Interacts with map4.

The protein resides in the cytoplasm. The protein localises to the cytoskeleton. Its subcellular location is the cell projection. It is found in the cilium. It localises to the cilium axoneme. The protein resides in the cilium basal body. Functionally, plays an inhibitory role on IL13 signaling by binding to IL13RA1 and recruits TRAF3 and DISC1 to the microtubules. Involved in the regulation of microtubule cytoskeleton organization. Is a negative regulator of microtubule stability, acting through the control of MAP4 levels. Involved in ciliogenesis. The sequence is that of TRAF3-interacting protein 1 (traf3ip1) from Danio rerio (Zebrafish).